A 627-amino-acid polypeptide reads, in one-letter code: Zinc finger MYM-type protein 5 (627 aa).

Residues 1–23 form a disordered region; sequence MEAHLADMESSGGPTSSLAGTSR. Polar residues predominate over residues 12-23; that stretch reads GGPTSSLAGTSR. Residue K59 forms a Glycyl lysine isopeptide (Lys-Gly) (interchain with G-Cter in SUMO2) linkage. Residues 91–123 are disordered; the sequence is DDEGDTDTNGGEEKNPTDFIEWGPNGNKSSTKN. Glycyl lysine isopeptide (Lys-Gly) (interchain with G-Cter in SUMO2) cross-links involve residues K137 and K195. The MYM-type 1 zinc-finger motif lies at 234–268; that stretch reads HLFCSTTCLSSFSHKRTRKTRNVMCKKDSPVRTTT. Residues 280–319 form an MYM-type 2; degenerate zinc finger; the sequence is QGFYNASLSPYENCQSLRKEVFTKSRCIICNKLGEVRHEI. 2 consecutive MYM-type zinc fingers follow at residues 326-354 and 370-396; these read HKLC…CSKY and KRFC…LLQN. The tract at residues 405 to 429 is disordered; the sequence is ENEKRLRESSGTLSGNTGDIPEKKE. Glycyl lysine isopeptide (Lys-Gly) (interchain with G-Cter in SUMO2) cross-links involve residues K408, K427, and K517.

As to quaternary structure, interacts (via N-terminal 120 amino acid region) with ETV5 (via C-terminal).

Its subcellular location is the nucleus. Functionally, functions as a transcriptional regulator. This Mus musculus (Mouse) protein is Zinc finger MYM-type protein 5 (Zmym5).